The following is a 165-amino-acid chain: Phosphopantetheine adenylyltransferase (165 aa).

Residue serine 9 participates in substrate binding. ATP is bound by residues 9–10 and histidine 17; that span reads SF. Substrate contacts are provided by lysine 41, isoleucine 75, and arginine 89. ATP-binding positions include 90–92, glutamate 100, and 125–131; these read GVR and YLFVRSD.

Belongs to the bacterial CoaD family. In terms of assembly, homohexamer. Requires Mg(2+) as cofactor.

The protein resides in the cytoplasm. It catalyses the reaction (R)-4'-phosphopantetheine + ATP + H(+) = 3'-dephospho-CoA + diphosphate. It functions in the pathway cofactor biosynthesis; coenzyme A biosynthesis; CoA from (R)-pantothenate: step 4/5. In terms of biological role, reversibly transfers an adenylyl group from ATP to 4'-phosphopantetheine, yielding dephospho-CoA (dPCoA) and pyrophosphate. This chain is Phosphopantetheine adenylyltransferase, found in Borrelia turicatae (strain 91E135).